Here is a 344-residue protein sequence, read N- to C-terminus: UDP-3-O-acylglucosamine N-acyltransferase (344 aa).

The active-site Proton acceptor is His-250.

The protein belongs to the transferase hexapeptide repeat family. LpxD subfamily. In terms of assembly, homotrimer.

The catalysed reaction is a UDP-3-O-[(3R)-3-hydroxyacyl]-alpha-D-glucosamine + a (3R)-hydroxyacyl-[ACP] = a UDP-2-N,3-O-bis[(3R)-3-hydroxyacyl]-alpha-D-glucosamine + holo-[ACP] + H(+). It participates in bacterial outer membrane biogenesis; LPS lipid A biosynthesis. Catalyzes the N-acylation of UDP-3-O-acylglucosamine using 3-hydroxyacyl-ACP as the acyl donor. Is involved in the biosynthesis of lipid A, a phosphorylated glycolipid that anchors the lipopolysaccharide to the outer membrane of the cell. The sequence is that of UDP-3-O-acylglucosamine N-acyltransferase from Maricaulis maris (strain MCS10) (Caulobacter maris).